A 475-amino-acid chain; its full sequence is Sulfate adenylyltransferase subunit 1 (475 aa).

The tr-type G domain occupies 25-239 (KSLLRFLTCG…EVLETVEIQR (215 aa)). Residues 34–41 (GSVDDGKS) are G1. A GTP-binding site is contributed by 34 to 41 (GSVDDGKS). A G2 region spans residues 92–96 (GITID). Residues 113 to 116 (DTPG) form a G3 region. GTP-binding positions include 113-117 (DTPGH) and 168-171 (NKMD). A G4 region spans residues 168 to 171 (NKMD). Positions 206-208 (SAL) are G5.

Belongs to the TRAFAC class translation factor GTPase superfamily. Classic translation factor GTPase family. CysN/NodQ subfamily. In terms of assembly, heterodimer composed of CysD, the smaller subunit, and CysN.

It catalyses the reaction sulfate + ATP + H(+) = adenosine 5'-phosphosulfate + diphosphate. It participates in sulfur metabolism; hydrogen sulfide biosynthesis; sulfite from sulfate: step 1/3. Its function is as follows. With CysD forms the ATP sulfurylase (ATPS) that catalyzes the adenylation of sulfate producing adenosine 5'-phosphosulfate (APS) and diphosphate, the first enzymatic step in sulfur assimilation pathway. APS synthesis involves the formation of a high-energy phosphoric-sulfuric acid anhydride bond driven by GTP hydrolysis by CysN coupled to ATP hydrolysis by CysD. The chain is Sulfate adenylyltransferase subunit 1 from Shigella flexneri.